Here is a 470-residue protein sequence, read N- to C-terminus: Coproporphyrinogen III oxidase (470 aa).

Residues 12–17 (GGGITG), 41–42 (EA), K49, 63–66 (GPDS), V256, W409, and 448–450 (VGI) each bind FAD.

Belongs to the protoporphyrinogen/coproporphyrinogen oxidase family. Coproporphyrinogen III oxidase subfamily. In terms of assembly, monomer. Requires FAD as cofactor.

The protein resides in the cytoplasm. It localises to the cell membrane. The enzyme catalyses coproporphyrinogen III + 3 O2 = coproporphyrin III + 3 H2O2. The protein operates within porphyrin-containing compound metabolism; protoheme biosynthesis. Only weakly inhibited by acifluorfen, in contrast to eukaryotic family members. Weakly inhibited by methylacifluorfen. Bilirubin, biliverdin and hemin are all competitive inhibitors. Functionally, involved in coproporphyrin-dependent heme b biosynthesis. Catalyzes the oxidation of coproporphyrinogen III to coproporphyrin III. Can also oxidize protoporphyrinogen IX to protoporphyrin-IX. The specific activity for the oxidation of coproporphyrinogen III is much higher than that for the oxidation of protoporphyrinogen IX. Can also oxidize mesoporphyrinogen IX, but not uroporphyrinogen III. This chain is Coproporphyrinogen III oxidase, found in Bacillus subtilis (strain 168).